The following is a 347-amino-acid chain: Leucine-rich repeat-containing protein 69 (347 aa).

8 LRR repeats span residues 38–60 (GLKT…CNLT), 61–82 (QLTT…MKYL), 84–105 (SLKN…ACDG), 108–129 (NLIL…VSRL), 131–153 (SLTY…CFLE), 154–175 (NLVE…IKFL), 177–199 (KLQK…CDLK), and 200–222 (KLRI…QDLK).

The protein belongs to the LRRC69 family.

The chain is Leucine-rich repeat-containing protein 69 (LRRC69) from Homo sapiens (Human).